Here is a 520-residue protein sequence, read N- to C-terminus: Amine oxidase [flavin-containing] B (520 aa).

S2 is modified (N-acetylserine). Residues 2–489 lie on the Cytoplasmic side of the membrane; it reads SSKCDVVVVG…TFLQRHLPSV (488 aa). K52 bears the N6-acetyllysine mark. C397 is modified (S-8alpha-FAD cysteine). Residues 490 to 516 form a helical; Anchor for type IV membrane protein membrane-spanning segment; that stretch reads PGLLKLIGLTTIFSATALGFLAHKRGL. Topologically, residues 517–520 are mitochondrial intermembrane; it reads LVRI.

In terms of assembly, monomer, homo- or heterodimer (containing two subunits of similar size). Each subunit contains a covalently bound flavin. Enzymatically active as monomer. FAD is required as a cofactor.

It is found in the mitochondrion outer membrane. The catalysed reaction is a secondary aliphatic amine + O2 + H2O = a primary amine + an aldehyde + H2O2. It catalyses the reaction a primary methyl amine + O2 + H2O = an aldehyde + H2O2 + NH4(+). It carries out the reaction benzylamine + O2 + H2O = benzaldehyde + H2O2 + NH4(+). The enzyme catalyses (R)-adrenaline + O2 + H2O = (R)-3,4-dihydroxymandelaldehyde + methylamine + H2O2. The catalysed reaction is dopamine + O2 + H2O = 3,4-dihydroxyphenylacetaldehyde + H2O2 + NH4(+). It catalyses the reaction tyramine + O2 + H2O = (4-hydroxyphenyl)acetaldehyde + H2O2 + NH4(+). It carries out the reaction (R)-noradrenaline + O2 + H2O = (R)-3,4-dihydroxymandelaldehyde + H2O2 + NH4(+). The enzyme catalyses 2-phenylethylamine + O2 + H2O = 2-phenylacetaldehyde + H2O2 + NH4(+). The catalysed reaction is N-acetylputrescine + O2 + H2O = 4-acetamidobutanal + H2O2 + NH4(+). Functionally, catalyzes the oxidative deamination of primary and some secondary amines such as neurotransmitters, and exogenous amines including the tertiary amine, neurotoxin 1-methyl-4-phenyl-1,2,3,6-tetrahydropyridine (MPTP), with concomitant reduction of oxygen to hydrogen peroxide and participates in the metabolism of neuroactive and vasoactive amines in the central nervous system and peripheral tissues. Preferentially degrades benzylamine and phenylethylamine. In Bos taurus (Bovine), this protein is Amine oxidase [flavin-containing] B.